Here is a 166-residue protein sequence, read N- to C-terminus: 2S seed storage protein 4 (166 aa).

An N-terminal signal peptide occupies residues 1–21; the sequence is MANKLFLVCAALALCFILTNA. Propeptides lie at residues 22–37 and 73–88; these read SVYRTVVEFDEDDASN and GPSLDDEFDMEDDIEN.

It belongs to the 2S seed storage albumins family. The mature protein consists of a small and a large chain linked by disulfide bonds.

Its function is as follows. This is a 2S seed storage protein. In Arabidopsis thaliana (Mouse-ear cress), this protein is 2S seed storage protein 4 (AT2S4).